Reading from the N-terminus, the 332-residue chain is Ketol-acid reductoisomerase (NADP(+)) (332 aa).

Residues 5–185 (VKVYYDDEVS…GCTRAGVIET (181 aa)) form the KARI N-terminal Rossmann domain. NADP(+) is bound by residues 28–31 (YGNQ), Arg51, Ser56, and 86–89 (DLVQ). Residue His111 is part of the active site. Gly137 is an NADP(+) binding site. Positions 186-331 (TFKDETESDL…RFIRKMSGLE (146 aa)) constitute a KARI C-terminal knotted domain. Positions 194, 198, 230, and 234 each coordinate Mg(2+). A substrate-binding site is contributed by Ser255.

This sequence belongs to the ketol-acid reductoisomerase family. Mg(2+) is required as a cofactor.

It carries out the reaction (2R)-2,3-dihydroxy-3-methylbutanoate + NADP(+) = (2S)-2-acetolactate + NADPH + H(+). It catalyses the reaction (2R,3R)-2,3-dihydroxy-3-methylpentanoate + NADP(+) = (S)-2-ethyl-2-hydroxy-3-oxobutanoate + NADPH + H(+). Its pathway is amino-acid biosynthesis; L-isoleucine biosynthesis; L-isoleucine from 2-oxobutanoate: step 2/4. It functions in the pathway amino-acid biosynthesis; L-valine biosynthesis; L-valine from pyruvate: step 2/4. Its function is as follows. Involved in the biosynthesis of branched-chain amino acids (BCAA). Catalyzes an alkyl-migration followed by a ketol-acid reduction of (S)-2-acetolactate (S2AL) to yield (R)-2,3-dihydroxy-isovalerate. In the isomerase reaction, S2AL is rearranged via a Mg-dependent methyl migration to produce 3-hydroxy-3-methyl-2-ketobutyrate (HMKB). In the reductase reaction, this 2-ketoacid undergoes a metal-dependent reduction by NADPH to yield (R)-2,3-dihydroxy-isovalerate. The polypeptide is Ketol-acid reductoisomerase (NADP(+)) (Pyrococcus abyssi (strain GE5 / Orsay)).